The following is a 91-amino-acid chain: UPF0298 protein OB1449 (91 aa).

Belongs to the UPF0298 family.

Its subcellular location is the cytoplasm. This is UPF0298 protein OB1449 from Oceanobacillus iheyensis (strain DSM 14371 / CIP 107618 / JCM 11309 / KCTC 3954 / HTE831).